We begin with the raw amino-acid sequence, 477 residues long: Alanine--glyoxylate aminotransferase 2 homolog 2, mitochondrial (477 aa).

A mitochondrion-targeting transit peptide spans 1 to 22 (MQRFAAKRSVQNISVSLWRRCI). Pyridoxal 5'-phosphate is bound by residues 165–166 (GT), Tyr192, and 292–295 (DEVQ). Lys321 is subject to N6-(pyridoxal phosphate)lysine. Pyridoxal 5'-phosphate is bound at residue Thr350.

This sequence belongs to the class-III pyridoxal-phosphate-dependent aminotransferase family. As to quaternary structure, homotetramer. Interacts with GRF3. It depends on pyridoxal 5'-phosphate as a cofactor.

The protein localises to the mitochondrion. It carries out the reaction glyoxylate + L-alanine = glycine + pyruvate. The polypeptide is Alanine--glyoxylate aminotransferase 2 homolog 2, mitochondrial (AGT3) (Arabidopsis thaliana (Mouse-ear cress)).